The sequence spans 692 residues: Elongation factor G (692 aa).

A tr-type G domain is found at 8–283 (NRIRNIGIAA…AVIDYLPAPT (276 aa)). Residues 17–24 (AHIDAGKT), 81–85 (DTPGH), and 135–138 (NKMD) each bind GTP.

The protein belongs to the TRAFAC class translation factor GTPase superfamily. Classic translation factor GTPase family. EF-G/EF-2 subfamily.

The protein resides in the cytoplasm. In terms of biological role, catalyzes the GTP-dependent ribosomal translocation step during translation elongation. During this step, the ribosome changes from the pre-translocational (PRE) to the post-translocational (POST) state as the newly formed A-site-bound peptidyl-tRNA and P-site-bound deacylated tRNA move to the P and E sites, respectively. Catalyzes the coordinated movement of the two tRNA molecules, the mRNA and conformational changes in the ribosome. This is Elongation factor G (fusA) from Helicobacter pylori (strain ATCC 700392 / 26695) (Campylobacter pylori).